Consider the following 10061-residue polypeptide: MATH and LRR domain-containing protein PFE0570w (10061 aa).

Disordered stretches follow at residues 166–210 (DMDN…EKKN), 244–471 (NNSD…NDIN), and 1004–1170 (DDQK…DTSF). Positions 169 to 179 (NNPNNHVSNNG) are enriched in polar residues. Residues 193-205 (TSNSIHKNNNTNI) show a composition bias toward low complexity. The segment covering 270 to 282 (KKSDNNNDKKNDD) has biased composition (basic and acidic residues). The segment covering 285 to 320 (NNNNNNNNNNNNNNNNNDNHVCTSNNQPNTINKQNN) has biased composition (low complexity). Residues 328-338 (DQNGRTKITPQ) show a composition bias toward polar residues. Residues 338-366 (QNVNQKEKEIKNVVKEKNNFNREEKDITN) adopt a coiled-coil conformation. Residues 342-365 (QKEKEIKNVVKEKNNFNREEKDIT) show a composition bias toward basic and acidic residues. The segment covering 366–375 (NSDDYDENST) has biased composition (acidic residues). Polar residues-rich tracts occupy residues 376-389 (DESC…TSSE) and 421-437 (VPSN…SAEN). The stretch at 431–469 (NVKSAENCNKEKKKKKKKKKKELNNDNKDNTLNNETMND) forms a coiled coil. Positions 441–451 (EKKKKKKKKKK) are enriched in basic residues. Low complexity predominate over residues 460–471 (NTLNNETMNDIN). Basic and acidic residues predominate over residues 1025–1037 (NEEKPNVNKEGNI). Over residues 1047–1057 (NKNKNNNNNNN) the composition is skewed to low complexity. The span at 1058-1132 (DKNDKNDKND…KKKKNGKEQN (75 aa)) shows a compositional bias: basic and acidic residues. Residues 1133-1165 (EDSTESDDESSVIDDNYIDDDSCDCDSESDSID) are compositionally biased toward acidic residues. One can recognise an MATH domain in the interval 1328–1458 (NGKIELYIPN…SGGLLIKGKV (131 aa)). The disordered stretch occupies residues 1651–1698 (GGNLQNEQKGDEDVKKEDVKKENVNKEEIKNGNNNNNNDENENEVDDN). Basic and acidic residues predominate over residues 1658–1680 (QKGDEDVKKEDVKKENVNKEEIK). Residues 1916 to 1948 (NYLSNLNKVKININDLNNNIVDVNNSIHNIEKE) adopt a coiled-coil conformation. Positions 1973–1995 (HKETSSIQNKGKEKSNNNIKSDD) are enriched in basic and acidic residues. Disordered stretches follow at residues 1973–1998 (HKET…DNNN), 2155–2245 (LNKS…PSYK), 2427–2566 (YSDD…NNIK), and 3120–3139 (SNET…NEMK). The span at 2216-2228 (NNDDKDDDDDDSY) shows a compositional bias: acidic residues. Basic and acidic residues predominate over residues 2235-2245 (SDGKKNDPSYK). Residues 2475–2484 (NNNNNNNNMM) show a composition bias toward low complexity. Basic and acidic residues-rich tracts occupy residues 2487–2496 (DDNKVNKNEE) and 2505–2527 (QIKE…RNED). 2 stretches are compositionally biased toward low complexity: residues 2552–2564 (NNNN…NNNN) and 3121–3133 (NETN…NRTN). A coiled-coil region spans residues 2555 to 2580 (NNNNNNNNNNIKRLDDSYNKLLKNKN). A helical membrane pass occupies residues 3398–3418 (KLILKKIFMYLNIICMIIKYI). Disordered regions lie at residues 3802 to 3826 (STND…YSKK), 3847 to 3890 (LTSG…DNNN), and 3919 to 3953 (ESND…EKKS). Positions 3809–3822 (VDRSDDSESNDDKK) are enriched in basic and acidic residues. Residues 3851-3890 (NSSSKNSKKNSNNESIQMDNTNNSNSNNNNKNDNNNDNNN) are compositionally biased toward low complexity. Polar residues predominate over residues 3926–3941 (KNQNIQSNEQSVTPNR). The span at 3942–3953 (NIEENKDHEKKS) shows a compositional bias: basic and acidic residues. Positions 3977–4001 (EHLGNATAVLNILQKKLENEELKKL) form a coiled coil. The span at 4039 to 4065 (VSAHKEKNVKTDSSDDKKKKEDNENNN) shows a compositional bias: basic and acidic residues. Disordered regions lie at residues 4039 to 4074 (VSAH…IIHN), 4155 to 4180 (KGNN…NNMG), 4352 to 4414 (SNNN…NNNN), 4919 to 4943 (NKRK…DNDN), 4991 to 5030 (DGLN…KNEK), and 5179 to 5207 (SKIA…KSNL). Residues 4157–4178 (NNSKDNNNNNNNNNNNNNNKNN) show a composition bias toward low complexity. Positions 4399–4424 (NNNNNNNNNNNNNNNNVNKEIIKLNS) form a coiled coil. 3 stretches are compositionally biased toward low complexity: residues 4929-4943 (NNNN…DNDN), 5004-5019 (NMNN…NNSN), and 5185-5202 (NGNN…NNNN). The stretch at 5006-5046 (NNVKNKNNNNNNSNNKRKKNEKNEKIDKIEQFLHESELEKD) forms a coiled coil. 3 coiled-coil regions span residues 5486–5563 (NNNN…NIYE), 5728–5810 (DVLK…DKEE), and 5900–6022 (MNND…INNY). Composition is skewed to basic and acidic residues over residues 5716 to 5732 (KDAK…VLKD), 5738 to 5811 (SNKE…KEEP), and 5909 to 5953 (NKNK…KKDN). Disordered regions lie at residues 5716 to 5816 (KDAK…QINE), 5892 to 6009 (EIIN…KKLK), 6123 to 6142 (KSET…VDGK), 6299 to 6338 (NDSI…DKGE), 6722 to 6760 (NMNN…NNNI), 7585 to 7730 (EDML…VEEK), and 7744 to 7787 (DLLS…KKSS). Over residues 5954 to 5968 (NNSNNNNNNNNLSNN) the composition is skewed to low complexity. Over residues 5969–5978 (GEEDPNDSDS) the composition is skewed to acidic residues. The segment covering 5991-6003 (NKNINDDSDDNNK) has biased composition (basic and acidic residues). The segment covering 6129–6138 (SNKNVESNDN) has biased composition (polar residues). 2 stretches are compositionally biased toward low complexity: residues 6314–6333 (SNSN…NNNN) and 6722–6759 (NMNN…NNNN). Positions 6719-6743 (NMNNMNNNNNNNNNNNNNNNNNNNN) form a coiled coil. A compositionally biased stretch (basic and acidic residues) spans 7585–7599 (EDMLHSKKTDVIQHG). Residues 7600–7685 (DEEEDDEEDD…EHINEEEQED (86 aa)) show a composition bias toward acidic residues. Coiled coils occupy residues 7601 to 7637 (EEED…DIED), 7710 to 7813 (NTKI…NKNE), 7934 to 7961 (KTDE…IDNE), and 8217 to 8241 (NINN…GKRE). A compositionally biased stretch (basic residues) spans 7749–7765 (SKKKNHKDKRNASKNKN). Basic and acidic residues predominate over residues 7766–7786 (KNKDILKKNENNINDEKEKKS). Disordered regions lie at residues 8189-8252 (ETGG…GGEE), 8293-8380 (GKVS…IIMS), and 8474-8497 (KKKN…MDEE). The segment covering 8218 to 8242 (INNKEKETNKNEEQQQGEAEGKREG) has biased composition (basic and acidic residues). Positions 8243–8252 (EGEEGEGGEE) are enriched in acidic residues. The segment covering 8305–8314 (LLNDKEHEKD) has biased composition (basic and acidic residues). Residues 8315-8363 (NEDNDEDNDEDDDDEDDDEDDEDDDDDDDDDDDDDDDDDYDEDYDEDYD) are compositionally biased toward acidic residues. The segment covering 8364 to 8374 (EKLVENKKNER) has biased composition (basic and acidic residues). Over residues 8478–8492 (YSNNNIYNNNSSNKV) the composition is skewed to low complexity. Coiled-coil stretches lie at residues 8644–8697 (SETL…ELNN), 8882–8907 (QYLE…VDNY), and 9219–9247 (IDMK…SNNN). 3 disordered regions span residues 9759-9779 (TIPR…NNNS), 9891-9926 (SNTS…SSSN), and 9985-10061 (KNNS…NNIY). Low complexity-rich tracts occupy residues 9764–9779 (NTTT…NNNS), 9899–9926 (NSSN…SSSN), and 9986–10022 (NNSI…NNNT). A compositionally biased stretch (polar residues) spans 10031-10041 (IFQQNQNHSDT). The span at 10042–10061 (NNNNNNNNKNNSNNNNNNIY) shows a compositional bias: low complexity.

The protein localises to the membrane. The sequence is that of MATH and LRR domain-containing protein PFE0570w from Plasmodium falciparum (isolate 3D7).